A 346-amino-acid chain; its full sequence is Histidinol-phosphate aminotransferase (346 aa).

N6-(pyridoxal phosphate)lysine is present on lysine 209.

Belongs to the class-II pyridoxal-phosphate-dependent aminotransferase family. Histidinol-phosphate aminotransferase subfamily. As to quaternary structure, homodimer. Pyridoxal 5'-phosphate serves as cofactor.

It carries out the reaction L-histidinol phosphate + 2-oxoglutarate = 3-(imidazol-4-yl)-2-oxopropyl phosphate + L-glutamate. It functions in the pathway amino-acid biosynthesis; L-histidine biosynthesis; L-histidine from 5-phospho-alpha-D-ribose 1-diphosphate: step 7/9. This chain is Histidinol-phosphate aminotransferase, found in Vibrio cholerae serotype O1 (strain ATCC 39315 / El Tor Inaba N16961).